The following is a 186-amino-acid chain: NADH-quinone oxidoreductase subunit B (186 aa).

[4Fe-4S] cluster is bound by residues C44, C45, C110, and C139.

Belongs to the complex I 20 kDa subunit family. As to quaternary structure, NDH-1 is composed of 14 different subunits. Subunits NuoB, C, D, E, F, and G constitute the peripheral sector of the complex. [4Fe-4S] cluster is required as a cofactor.

Its subcellular location is the cell inner membrane. The catalysed reaction is a quinone + NADH + 5 H(+)(in) = a quinol + NAD(+) + 4 H(+)(out). In terms of biological role, NDH-1 shuttles electrons from NADH, via FMN and iron-sulfur (Fe-S) centers, to quinones in the respiratory chain. The immediate electron acceptor for the enzyme in this species is believed to be ubiquinone. Couples the redox reaction to proton translocation (for every two electrons transferred, four hydrogen ions are translocated across the cytoplasmic membrane), and thus conserves the redox energy in a proton gradient. The protein is NADH-quinone oxidoreductase subunit B of Leptospira interrogans serogroup Icterohaemorrhagiae serovar copenhageni (strain Fiocruz L1-130).